A 53-amino-acid polypeptide reads, in one-letter code: ATP synthase protein 8 (53 aa).

A helical membrane pass occupies residues 4-24; that stretch reads MAPISWLLLFIIFSITFILFC.

The protein belongs to the ATPase protein 8 family. As to quaternary structure, F-type ATPases have 2 components, CF(1) - the catalytic core - and CF(0) - the membrane proton channel.

The protein resides in the mitochondrion membrane. Functionally, mitochondrial membrane ATP synthase (F(1)F(0) ATP synthase or Complex V) produces ATP from ADP in the presence of a proton gradient across the membrane which is generated by electron transport complexes of the respiratory chain. F-type ATPases consist of two structural domains, F(1) - containing the extramembraneous catalytic core and F(0) - containing the membrane proton channel, linked together by a central stalk and a peripheral stalk. During catalysis, ATP synthesis in the catalytic domain of F(1) is coupled via a rotary mechanism of the central stalk subunits to proton translocation. Part of the complex F(0) domain. Minor subunit located with subunit a in the membrane. This is ATP synthase protein 8 (mt:ATPase8) from Drosophila sechellia (Fruit fly).